We begin with the raw amino-acid sequence, 1073 residues long: Carbamoyl phosphate synthase large chain (1073 aa).

Positions 1–399 (MPKREDIKKV…SLLKAFKSLD (399 aa)) are carboxyphosphate synthetic domain. Arginine 129, arginine 169, glycine 175, glycine 176, glutamate 208, valine 210, glutamate 215, glycine 241, valine 242, histidine 243, glutamine 284, and glutamate 296 together coordinate ATP. Positions 133 to 325 (KETMLSIGEK…IARVTAKIAI (193 aa)) constitute an ATP-grasp 1 domain. Glutamine 284, glutamate 296, and asparagine 298 together coordinate Mg(2+). Residues glutamine 284, glutamate 296, and asparagine 298 each coordinate Mn(2+). The interval 400–540 (IDNQLGIKRW…YSTYEDTCET (141 aa)) is oligomerization domain. The segment at 541 to 931 (NSTDKKKILI…YKAELAADNL (391 aa)) is carbamoyl phosphate synthetic domain. The ATP-grasp 2 domain occupies 672-863 (YLLMQELGIP…LAKIAAKVIA (192 aa)). Positions 708, 747, 749, 754, 779, 780, 781, 782, 822, and 834 each coordinate ATP. Mg(2+)-binding residues include glutamine 822, glutamate 834, and asparagine 836. Positions 822, 834, and 836 each coordinate Mn(2+). The 142-residue stretch at 930–1071 (NLLPLTGKVF…NEYHKEMEQK (142 aa)) folds into the MGS-like domain. The tract at residues 932 to 1073 (LPLTGKVFLS…YHKEMEQKEE (142 aa)) is allosteric domain.

Belongs to the CarB family. Composed of two chains; the small (or glutamine) chain promotes the hydrolysis of glutamine to ammonia, which is used by the large (or ammonia) chain to synthesize carbamoyl phosphate. Tetramer of heterodimers (alpha,beta)4. The cofactor is Mg(2+). Mn(2+) serves as cofactor.

The catalysed reaction is hydrogencarbonate + L-glutamine + 2 ATP + H2O = carbamoyl phosphate + L-glutamate + 2 ADP + phosphate + 2 H(+). The enzyme catalyses hydrogencarbonate + NH4(+) + 2 ATP = carbamoyl phosphate + 2 ADP + phosphate + 2 H(+). It functions in the pathway amino-acid biosynthesis; L-arginine biosynthesis; carbamoyl phosphate from bicarbonate: step 1/1. Its pathway is pyrimidine metabolism; UMP biosynthesis via de novo pathway; (S)-dihydroorotate from bicarbonate: step 1/3. In terms of biological role, large subunit of the glutamine-dependent carbamoyl phosphate synthetase (CPSase). CPSase catalyzes the formation of carbamoyl phosphate from the ammonia moiety of glutamine, carbonate, and phosphate donated by ATP, constituting the first step of 2 biosynthetic pathways, one leading to arginine and/or urea and the other to pyrimidine nucleotides. The large subunit (synthetase) binds the substrates ammonia (free or transferred from glutamine from the small subunit), hydrogencarbonate and ATP and carries out an ATP-coupled ligase reaction, activating hydrogencarbonate by forming carboxy phosphate which reacts with ammonia to form carbamoyl phosphate. This chain is Carbamoyl phosphate synthase large chain, found in Methanosarcina mazei (strain ATCC BAA-159 / DSM 3647 / Goe1 / Go1 / JCM 11833 / OCM 88) (Methanosarcina frisia).